A 74-amino-acid polypeptide reads, in one-letter code: ATP synthase subunit c (74 aa).

The next 2 helical transmembrane spans lie at 9-29 (IAIAFMAFGMAGAALGVASIF) and 51-71 (LIGAGLAEAMGLFSFILAILL).

Belongs to the ATPase C chain family. In terms of assembly, F-type ATPases have 2 components, F(1) - the catalytic core - and F(0) - the membrane proton channel. F(1) has five subunits: alpha(3), beta(3), gamma(1), delta(1), epsilon(1). F(0) has three main subunits: a(1), b(2) and c(10-14). The alpha and beta chains form an alternating ring which encloses part of the gamma chain. F(1) is attached to F(0) by a central stalk formed by the gamma and epsilon chains, while a peripheral stalk is formed by the delta and b chains.

The protein resides in the cell inner membrane. Its function is as follows. F(1)F(0) ATP synthase produces ATP from ADP in the presence of a proton or sodium gradient. F-type ATPases consist of two structural domains, F(1) containing the extramembraneous catalytic core and F(0) containing the membrane proton channel, linked together by a central stalk and a peripheral stalk. During catalysis, ATP synthesis in the catalytic domain of F(1) is coupled via a rotary mechanism of the central stalk subunits to proton translocation. Key component of the F(0) channel; it plays a direct role in translocation across the membrane. A homomeric c-ring of between 10-14 subunits forms the central stalk rotor element with the F(1) delta and epsilon subunits. In Orientia tsutsugamushi (strain Ikeda) (Rickettsia tsutsugamushi), this protein is ATP synthase subunit c.